The following is a 70-amino-acid chain: MKPGIHPKYAIITANCTCGNVIKVNSTAGKDLHLDVCGACHPFYTGTQKVVDTGGRIDKFNKRFAVLAKK.

Residues C16, C18, C37, and C40 each contribute to the Zn(2+) site.

Belongs to the bacterial ribosomal protein bL31 family. Type A subfamily. Part of the 50S ribosomal subunit. Requires Zn(2+) as cofactor.

In terms of biological role, binds the 23S rRNA. The sequence is that of Large ribosomal subunit protein bL31 from Shewanella baltica (strain OS223).